The chain runs to 362 residues: Dual-specificity RNA methyltransferase RlmN (362 aa).

The active-site Proton acceptor is Glu-100. Residues 106-345 form the Radical SAM core domain; sequence EPDRNTLCIS…VFIRNSRGED (240 aa). A disulfide bond links Cys-113 and Cys-350. Residues Cys-120, Cys-124, and Cys-127 each contribute to the [4Fe-4S] cluster site. S-adenosyl-L-methionine-binding positions include 177-178, Ser-209, 231-233, and Asn-307; these read GE and SLH. Cys-350 acts as the S-methylcysteine intermediate in catalysis.

The protein belongs to the radical SAM superfamily. RlmN family. The cofactor is [4Fe-4S] cluster.

The protein localises to the cytoplasm. The catalysed reaction is adenosine(2503) in 23S rRNA + 2 reduced [2Fe-2S]-[ferredoxin] + 2 S-adenosyl-L-methionine = 2-methyladenosine(2503) in 23S rRNA + 5'-deoxyadenosine + L-methionine + 2 oxidized [2Fe-2S]-[ferredoxin] + S-adenosyl-L-homocysteine. It catalyses the reaction adenosine(37) in tRNA + 2 reduced [2Fe-2S]-[ferredoxin] + 2 S-adenosyl-L-methionine = 2-methyladenosine(37) in tRNA + 5'-deoxyadenosine + L-methionine + 2 oxidized [2Fe-2S]-[ferredoxin] + S-adenosyl-L-homocysteine. Specifically methylates position 2 of adenine 2503 in 23S rRNA and position 2 of adenine 37 in tRNAs. m2A2503 modification seems to play a crucial role in the proofreading step occurring at the peptidyl transferase center and thus would serve to optimize ribosomal fidelity. The chain is Dual-specificity RNA methyltransferase RlmN from Desulfotalea psychrophila (strain LSv54 / DSM 12343).